The primary structure comprises 688 residues: GTPase IMAP family member 8 (688 aa).

Positions 22 to 44 (TSIGQGERPRASRGQESNFKQSQ) are disordered. Polar residues predominate over residues 35–44 (GQESNFKQSQ). 3 AIG1-type G domains span residues 46–246 (TSTL…TENS), 281–471 (TPEL…VIRE), and 472–681 (KELL…SAVG). The segment at 55–62 (GKQGAGKS) is G1. Residues 55–63 (GKQGAGKSA) and serine 76 each bind GTP. Residues 82–86 (MVTKR) are G2. Positions 103–106 (DTPD) are G3. The G4 stretch occupies residues 171-174 (TRED). GTP is bound by residues 172 to 174 (RED) and asparagine 208. Residues 207–209 (NNK) are G5.

It belongs to the TRAFAC class TrmE-Era-EngA-EngB-Septin-like GTPase superfamily. AIG1/Toc34/Toc159-like paraseptin GTPase family. IAN subfamily. Spleen, thymus and T-cells. Greatly reduced in T-cells from lymphopenic rats.

The protein resides in the endoplasmic reticulum. Its subcellular location is the golgi apparatus. It localises to the mitochondrion. It is found in the cytoplasm. The protein localises to the cytosol. In terms of biological role, exerts an anti-apoptotic effect in the immune system and is involved in responses to infections. The polypeptide is GTPase IMAP family member 8 (Gimap8) (Rattus norvegicus (Rat)).